We begin with the raw amino-acid sequence, 178 residues long: Small ribosomal subunit protein uS7c (178 aa).

Positions 137–146 (QKKEEIEKSK) are enriched in basic and acidic residues. Residues 137–178 (QKKEEIEKSKSPVNNNKKFISKNKKSKNKKQKKRLKRKKNIY) form a disordered region. A compositionally biased stretch (basic residues) spans 155–178 (FISKNKKSKNKKQKKRLKRKKNIY).

Belongs to the universal ribosomal protein uS7 family. Part of the 30S ribosomal subunit.

The protein resides in the plastid. In terms of biological role, one of the primary rRNA binding proteins, it binds directly to 16S rRNA where it nucleates assembly of the head domain of the 30S subunit. The protein is Small ribosomal subunit protein uS7c (rps7) of Euglena longa (Euglenophycean alga).